We begin with the raw amino-acid sequence, 332 residues long: Cysteine and histidine-rich domain-containing protein 1 (332 aa).

Alanine 2 is subject to N-acetylalanine. Positions 2–77 are interaction with PPP5C; it reads ALLCYNRGCG…KPPEPVKPEV (76 aa). Zn(2+)-binding residues include cysteine 5, cysteine 10, cysteine 24, histidine 27, cysteine 42, and cysteine 43. CHORD domains are found at residues 5–64 and 157–216; these read CYNR…KGRH and CKNG…TGKH. The residue at position 47 (threonine 47) is a Phosphothreonine. Serine 51 is subject to Phosphoserine. Residues cysteine 59, histidine 64, cysteine 157, cysteine 162, cysteine 176, histidine 179, cysteine 194, cysteine 195, cysteine 211, and histidine 216 each coordinate Zn(2+). The disordered stretch occupies residues 62 to 82; it reads GRHNSEKPPEPVKPEVKTTEK. A compositionally biased stretch (basic and acidic residues) spans 64-82; that stretch reads HNSEKPPEPVKPEVKTTEK. The interaction with HSP90AA1 and HSP90AB1 stretch occupies residues 65-316; it reads NSEKPPEPVK…AEPMQWASLE (252 aa). Residues 227–316 form the CS domain; the sequence is VVPCRHDWHQ…AEPMQWASLE (90 aa).

Interacts with HSP90AA1, HSP90AB1, PPP5C, ROCK1 and ROCK2.

In terms of biological role, regulates centrosome duplication, probably by inhibiting the kinase activity of ROCK2. Proposed to act as co-chaperone for HSP90. May play a role in the regulation of NOD1 via a HSP90 chaperone complex. In vitro, has intrinsic chaperone activity. This function may be achieved by inhibiting association of ROCK2 with NPM1. Plays a role in ensuring the localization of the tyrosine kinase receptor EGFR to the plasma membrane, and thus ensures the subsequent regulation of EGFR activity and EGF-induced actin cytoskeleton remodeling. Involved in stress response. Prevents tumorigenesis. This Bos taurus (Bovine) protein is Cysteine and histidine-rich domain-containing protein 1 (CHORDC1).